The sequence spans 382 residues: uncharacterized protein (382 aa).

This is an uncharacterized protein from Orgyia pseudotsugata multicapsid polyhedrosis virus (OpMNPV).